Here is a 270-residue protein sequence, read N- to C-terminus: Putative phosphoenolpyruvate synthase regulatory protein (270 aa).

150–157 (GVSRCGKT) is an ADP binding site.

This sequence belongs to the pyruvate, phosphate/water dikinase regulatory protein family. PSRP subfamily.

The catalysed reaction is [pyruvate, water dikinase] + ADP = [pyruvate, water dikinase]-phosphate + AMP + H(+). The enzyme catalyses [pyruvate, water dikinase]-phosphate + phosphate + H(+) = [pyruvate, water dikinase] + diphosphate. Functionally, bifunctional serine/threonine kinase and phosphorylase involved in the regulation of the phosphoenolpyruvate synthase (PEPS) by catalyzing its phosphorylation/dephosphorylation. In Shewanella oneidensis (strain ATCC 700550 / JCM 31522 / CIP 106686 / LMG 19005 / NCIMB 14063 / MR-1), this protein is Putative phosphoenolpyruvate synthase regulatory protein.